The sequence spans 312 residues: Pre-mRNA-splicing factor 38A (312 aa).

Residues 1–179 (MANRTVKDAH…VLEEAEQLEP (179 aa)) are N-terminal protein interaction domain. Residues Ser11, Ser193, Ser194, Ser209, and Ser226 each carry the phosphoserine modification. The stretch at 170 to 204 (VLEEAEQLEPRVSALEEDMDDVESSEEEEEEDEKL) forms a coiled coil. Residues 181–312 (VSALEEDMDD…SHKKSRRGNE (132 aa)) are disordered. Residues 184–202 (LEEDMDDVESSEEEEEEDE) are compositionally biased toward acidic residues. Over residues 203-224 (KLERVPSPDHRRRSYRDLDKPR) the composition is skewed to basic and acidic residues. 2 stretches are compositionally biased toward basic residues: residues 225-294 (RSPT…RSHS) and 301-312 (KKSHKKSRRGNE).

It belongs to the PRP38 family. In terms of assembly, component of the spliceosome B complex. Interacts (via N-terminal interaction domain) with ZMAT2 and MFAP1.

It is found in the nucleus. In terms of biological role, involved in pre-mRNA splicing as a component of the spliceosome. In Bos taurus (Bovine), this protein is Pre-mRNA-splicing factor 38A (PRPF38A).